The chain runs to 286 residues: Ribose-phosphate pyrophosphokinase (286 aa).

Residues 34–36 (DGE) and 91–93 (RQH) contribute to the ATP site. 2 residues coordinate Mg(2+): H124 and D161. K184 is a catalytic residue. Residues R186, D210, and 214-218 (STGGT) contribute to the D-ribose 5-phosphate site.

Belongs to the ribose-phosphate pyrophosphokinase family. Class III (archaeal) subfamily. In terms of assembly, homodimer. The cofactor is Mg(2+).

It is found in the cytoplasm. It carries out the reaction D-ribose 5-phosphate + ATP = 5-phospho-alpha-D-ribose 1-diphosphate + AMP + H(+). The protein operates within metabolic intermediate biosynthesis; 5-phospho-alpha-D-ribose 1-diphosphate biosynthesis; 5-phospho-alpha-D-ribose 1-diphosphate from D-ribose 5-phosphate (route I): step 1/1. In terms of biological role, involved in the biosynthesis of the central metabolite phospho-alpha-D-ribosyl-1-pyrophosphate (PRPP) via the transfer of pyrophosphoryl group from ATP to 1-hydroxyl of ribose-5-phosphate (Rib-5-P). This is Ribose-phosphate pyrophosphokinase from Thermoplasma volcanium (strain ATCC 51530 / DSM 4299 / JCM 9571 / NBRC 15438 / GSS1).